We begin with the raw amino-acid sequence, 651 residues long: Aspartate--tRNA ligase, mitochondrial (651 aa).

A mitochondrion-targeting transit peptide spans 1-44 (MFCWLSRLCGELSTPTRRTTQLIWSSAARSMVLSSQRIPELSSF). T216 carries the phosphothreonine modification. S239 is modified (phosphoserine). The tract at residues 241–244 (QQFK) is aspartate. R263 contacts L-aspartate. 263–265 (RDE) contacts ATP. K379 bears the N6-acetyllysine mark. E532 lines the ATP pocket. R539 contributes to the L-aspartate binding site. 581–584 (GLDR) contributes to the ATP binding site.

The protein belongs to the class-II aminoacyl-tRNA synthetase family. Type 1 subfamily. As to quaternary structure, homodimer.

It localises to the mitochondrion matrix. Its subcellular location is the mitochondrion membrane. It catalyses the reaction tRNA(Asp) + L-aspartate + ATP = L-aspartyl-tRNA(Asp) + AMP + diphosphate. Functionally, catalyzes the attachment of aspartate to tRNA(Asp) in a two-step reaction: aspartate is first activated by ATP to form Asp-AMP and then transferred to the acceptor end of tRNA(Asp). The polypeptide is Aspartate--tRNA ligase, mitochondrial (DARS2) (Bos taurus (Bovine)).